The chain runs to 224 residues: uncharacterized protein (224 aa).

A run of 4 helical transmembrane segments spans residues 39–59 (LICLIAGGVQVFMGGYIFYSI), 70–90 (YLSLSVVGFYACLTGLLILFA), 103–123 (VFVFLCNGLSRGIIYILIGAI), and 139–159 (MHIGLVCIAGGVVSIIEFLIT).

The protein resides in the membrane. This is an uncharacterized protein from Dictyostelium discoideum (Social amoeba).